Reading from the N-terminus, the 269-residue chain is Surfeit locus protein 4 (269 aa).

The next 6 membrane-spanning stretches (helical) occupy residues 64 to 84, 92 to 112, 157 to 177, 179 to 199, 203 to 223, and 242 to 262; these read FLAS…CILV, YACF…SILW, MQLG…HFDM, FFYI…AIGF, LAAL…NAFW, and TMSV…GVSM. The Di-lysine motif signature appears at 266–269; the sequence is KKEW.

The protein belongs to the SURF4 family.

The protein resides in the endoplasmic reticulum membrane. It is found in the endoplasmic reticulum-Golgi intermediate compartment membrane. It localises to the golgi apparatus membrane. Endoplasmic reticulum cargo receptor that mediates the export of lipoproteins by recruiting cargos into COPII vesicles to facilitate their secretion. Acts as a cargo receptor for lipoproteins bearing both APOB and APOA1, thereby regulating lipoprotein delivery and the maintenance of lipid homeostasis. The polypeptide is Surfeit locus protein 4 (Gallus gallus (Chicken)).